Consider the following 158-residue polypeptide: Ribonuclease H (158 aa).

The 147-residue stretch at 1 to 147 (MKVTIYTDGA…CDVLATTAAD (147 aa)) folds into the RNase H type-1 domain. Mg(2+)-binding residues include D8, E52, D74, and D139.

This sequence belongs to the RNase H family. In terms of assembly, monomer. Mg(2+) serves as cofactor.

The protein localises to the cytoplasm. The enzyme catalyses Endonucleolytic cleavage to 5'-phosphomonoester.. Functionally, endonuclease that specifically degrades the RNA of RNA-DNA hybrids. This chain is Ribonuclease H, found in Lachnoclostridium phytofermentans (strain ATCC 700394 / DSM 18823 / ISDg) (Clostridium phytofermentans).